Here is a 500-residue protein sequence, read N- to C-terminus: ATP synthase subunit alpha (500 aa).

An ATP-binding site is contributed by 168–175; it reads GDRQTGKT.

The protein belongs to the ATPase alpha/beta chains family. F-type ATPases have 2 components, CF(1) - the catalytic core - and CF(0) - the membrane proton channel. CF(1) has five subunits: alpha(3), beta(3), gamma(1), delta(1), epsilon(1). CF(0) has three main subunits: a(1), b(2) and c(9-12). The alpha and beta chains form an alternating ring which encloses part of the gamma chain. CF(1) is attached to CF(0) by a central stalk formed by the gamma and epsilon chains, while a peripheral stalk is formed by the delta and b chains.

Its subcellular location is the cell membrane. It carries out the reaction ATP + H2O + 4 H(+)(in) = ADP + phosphate + 5 H(+)(out). Produces ATP from ADP in the presence of a proton gradient across the membrane. The alpha chain is a regulatory subunit. The polypeptide is ATP synthase subunit alpha (Streptococcus suis (strain 98HAH33)).